A 313-amino-acid chain; its full sequence is Short-chain dehydrogenase/reductase family 9C member 7 (313 aa).

Residue 29–53 (FITGCDSGFGNLLARQLVDRGMRVL) participates in NADP(+) binding. Residue serine 160 participates in substrate binding. Tyrosine 172 functions as the Proton acceptor in the catalytic mechanism. A Phosphoserine modification is found at serine 185.

Belongs to the short-chain dehydrogenases/reductases (SDR) family.

The protein resides in the cytoplasm. It carries out the reaction a N-[omega-(9R,10R)-epoxy-(13R)-hydroxy-(11E)-octadecenoyloxy]acyl-beta-D-glucosyl-(1&lt;-&gt;1)-sphing-4E-enine + NAD(+) = a N-[omega-(9R,10R)-epoxy-13-oxo-(11E)-octadecenoyloxy]acyl-beta-D-glucosyl-(1&lt;-&gt;1)-sphing-4E-enine + NADH + H(+). The enzyme catalyses a N-[omega-(9R,10R)-epoxy-(13R)-hydroxy-(11E)-octadecenoyloxy]-acylsphing-4E-enine + NAD(+) = a N-[omega-(9R,10R)-epoxy-13-oxo-(11E)-octadecenoyloxy]-acylsphing-4E-enine + NADH + H(+). Functionally, plays a crucial role in the formation of the epidermal permeability barrier. Catalyzes the NAD+-dependent dehydrogenation of the linoleate 9,10-trans-epoxy-11E-13-alcohol esterified in omega-O-acylceramides (such as in N-[omega-(9R,10R)-epoxy-(13R)-hydroxy-(11E)-octadecenoyloxy]-acylsphing-4E-enine) to the corresponding 13-ketone, the reactive moiety required for binding of epidermal ceramides to proteins. Displays weak conversion of all-trans-retinal to all-trans-retinol in the presence of NADH. Has apparently no steroid dehydrogenase activity. This Bos taurus (Bovine) protein is Short-chain dehydrogenase/reductase family 9C member 7 (SDR9C7).